A 263-amino-acid chain; its full sequence is Ret finger protein-like 4B (263 aa).

Residues 11–53 (CPVCLDFFSCSISLSCTHVFCFDCIQRYILENHDFRAMCPLCR) form an RING-type zinc finger. One can recognise a B30.2/SPRY domain in the interval 76–263 (HNSRLEQSLH…ESGNVLTICP (188 aa)).

This chain is Ret finger protein-like 4B (RFPL4B), found in Homo sapiens (Human).